The primary structure comprises 204 residues: Holliday junction resolvase RecU (204 aa).

Residues 1-24 are disordered; sequence MTIHYPNGQQPVQHYNTHNELPTP. The segment covering 7–24 has biased composition (polar residues); that stretch reads NGQQPVQHYNTHNELPTP. Mg(2+)-binding residues include threonine 87, aspartate 89, aspartate 102, and glutamine 121.

It belongs to the RecU family. Requires Mg(2+) as cofactor.

The protein localises to the cytoplasm. The enzyme catalyses Endonucleolytic cleavage at a junction such as a reciprocal single-stranded crossover between two homologous DNA duplexes (Holliday junction).. Functionally, endonuclease that resolves Holliday junction intermediates in genetic recombination. Cleaves mobile four-strand junctions by introducing symmetrical nicks in paired strands. Promotes annealing of linear ssDNA with homologous dsDNA. Required for DNA repair, homologous recombination and chromosome segregation. The protein is Holliday junction resolvase RecU of Limosilactobacillus reuteri (strain DSM 20016) (Lactobacillus reuteri).